Here is a 407-residue protein sequence, read N- to C-terminus: 1-deoxy-D-xylulose 5-phosphate reductoisomerase (407 aa).

The NADPH site is built by Thr25, Gly26, Ser27, Ile28, Asn53, and Asn136. A 1-deoxy-D-xylulose 5-phosphate-binding site is contributed by Lys137. NADPH is bound at residue Glu138. Asp162 contacts Mn(2+). 1-deoxy-D-xylulose 5-phosphate contacts are provided by Ser163, Glu164, Ser188, and His211. Glu164 provides a ligand contact to Mn(2+). Gly217 serves as a coordination point for NADPH. 4 residues coordinate 1-deoxy-D-xylulose 5-phosphate: Ser224, Asn229, Lys230, and Glu233. Glu233 serves as a coordination point for Mn(2+).

It belongs to the DXR family. Mg(2+) is required as a cofactor. Requires Mn(2+) as cofactor.

The catalysed reaction is 2-C-methyl-D-erythritol 4-phosphate + NADP(+) = 1-deoxy-D-xylulose 5-phosphate + NADPH + H(+). The protein operates within isoprenoid biosynthesis; isopentenyl diphosphate biosynthesis via DXP pathway; isopentenyl diphosphate from 1-deoxy-D-xylulose 5-phosphate: step 1/6. Functionally, catalyzes the NADPH-dependent rearrangement and reduction of 1-deoxy-D-xylulose-5-phosphate (DXP) to 2-C-methyl-D-erythritol 4-phosphate (MEP). The sequence is that of 1-deoxy-D-xylulose 5-phosphate reductoisomerase from Nitrobacter winogradskyi (strain ATCC 25391 / DSM 10237 / CIP 104748 / NCIMB 11846 / Nb-255).